The primary structure comprises 192 residues: T-cell surface glycoprotein CD3 epsilon chain (192 aa).

The N-terminal stretch at Met1–Ala21 is a signal peptide. At Asp23–Glu114 the chain is on the extracellular side. Residues Glu26–Leu97 form the Ig-like domain. A disulfide bridge links Cys43 with Cys84. Asn72 carries N-linked (GlcNAc...) asparagine glycosylation. The chain crosses the membrane as a helical span at residues Val115–Tyr135. Topologically, residues Trp136–Val192 are cytoplasmic. The segment at Ser145–Gln180 is disordered. The NUMB-binding region stretch occupies residues Gln160–Arg177. An ITAM domain is found at Gly163–Arg190. Residues Arg164 to Pro171 are proline-rich sequence. 2 positions are modified to phosphotyrosine: Tyr173 and Tyr184.

The TCR-CD3 complex is composed of a CD3D/CD3E and a CD3G/CD3E heterodimers that preferentially associate with TCRalpha and TCRbeta, respectively, to form TCRalpha/CD3E/CD3G and TCRbeta/CD3G/CD3E trimers. In turn, the hexamer interacts with CD3Z homodimer to form the TCR-CD3 complex. Alternatively, TCRalpha and TCRbeta can be replaced by TCRgamma and TCRdelta. Interacts with CD6. Interacts (via Proline-rich sequence) with NCK1; the interaction is ligand dependent but independent of tyrosine kinase activation. In terms of processing, phosphorylated on Tyr residues after T-cell receptor triggering by LCK in association with CD4/CD8.

The protein resides in the cell membrane. In terms of biological role, part of the TCR-CD3 complex present on T-lymphocyte cell surface that plays an essential role in adaptive immune response. When antigen presenting cells (APCs) activate T-cell receptor (TCR), TCR-mediated signals are transmitted across the cell membrane by the CD3 chains CD3D, CD3E, CD3G and CD3Z. All CD3 chains contain immunoreceptor tyrosine-based activation motifs (ITAMs) in their cytoplasmic domain. Upon TCR engagement, these motifs become phosphorylated by Src family protein tyrosine kinases LCK and FYN, resulting in the activation of downstream signaling pathways. In addition of this role of signal transduction in T-cell activation, CD3E plays an essential role in correct T-cell development. Also participates in internalization and cell surface down-regulation of TCR-CD3 complexes via endocytosis sequences present in CD3E cytosolic region. In addition to its role as a TCR coreceptor, it serves as a receptor for ITPRIPL1. Ligand recognition inhibits T-cell activation by promoting interaction with NCK1, which prevents CD3E-ZAP70 interaction and blocks the ERK-NFkB signaling cascade and calcium influx. The sequence is that of T-cell surface glycoprotein CD3 epsilon chain (CD3E) from Bos taurus (Bovine).